The primary structure comprises 439 residues: Protein translocase subunit SecY (439 aa).

Transmembrane regions (helical) follow at residues 23-43 (IASVVIALIIFRIGSFIPIPG), 77-97 (IFALGIMPYISSSIIIQLLTL), 125-145 (LVLALFQSIGIVTSLPKISGM), 154-174 (FYFYFTAIIILVTGTMFLMWL), 187-207 (ISIIIFIGIIAGLPSAIVHTI), 217-237 (ILLFLCVLILIFSVVFLVVFI), 274-294 (VIPAIFASSVVLFPVTIISWF), 317-337 (YLILYVFSIIFFCFFYTGLVF), 369-389 (IMIRLTLFGSLYIAFICLIPE), and 397-417 (VPFYFGGTSLLIVVVVIMDFI).

This sequence belongs to the SecY/SEC61-alpha family. As to quaternary structure, component of the Sec protein translocase complex. Heterotrimer consisting of SecY, SecE and SecG subunits. The heterotrimers can form oligomers, although 1 heterotrimer is thought to be able to translocate proteins. Interacts with the ribosome. Interacts with SecDF, and other proteins may be involved. Interacts with SecA.

It is found in the cell membrane. Its function is as follows. The central subunit of the protein translocation channel SecYEG. Consists of two halves formed by TMs 1-5 and 6-10. These two domains form a lateral gate at the front which open onto the bilayer between TMs 2 and 7, and are clamped together by SecE at the back. The channel is closed by both a pore ring composed of hydrophobic SecY resides and a short helix (helix 2A) on the extracellular side of the membrane which forms a plug. The plug probably moves laterally to allow the channel to open. The ring and the pore may move independently. In Buchnera aphidicola subsp. Schizaphis graminum (strain Sg), this protein is Protein translocase subunit SecY.